The following is a 473-amino-acid chain: Dynein axonemal assembly factor 11 (473 aa).

LRR repeat units follow at residues 22–43, 45–66, 67–88, and 89–110; these read SLEE…DKWC, DLKI…SKLK, KLEY…EGCE, and WLTK…KTLT. Residues 123–161 form the LRRCT domain; the sequence is NPCADFDGYRQFVVVTLQQLKWLDGKEIERSERIQALQN. A coiled-coil region spans residues 153–205; sequence SERIQALQNYTSVEQQIREQEKAYCLRRAKEKEEAQRKLEEENESEDKKKSST. 2 stretches are compositionally biased toward basic and acidic residues: residues 188–202 and 273–283; these read QRKL…DKKK and EKQRKAQDKLS. 3 disordered regions span residues 188–244, 273–292, and 387–473; these read QRKL…TKES, EKQR…AKPP, and VGEM…PPLI. Residues 305-402 enclose the CS domain; it reads VNEAKLDFSL…GGQRTPTSVK (98 aa). Positions 397–408 are enriched in low complexity; that stretch reads TPTSVKTTSTSS. A compositionally biased stretch (basic and acidic residues) spans 417-431; sequence KQIERLEVDPSKHSC. Over residues 456 to 467 the composition is skewed to acidic residues; sequence PSEEDPDFEDNP.

This sequence belongs to the tilB family. In terms of assembly, interacts (via CS domain) with ZMYND10 (via C-terminus). As to expression, mainly expressed in cells with motile cilia. Expressed in epithelial cells of the trachea, testis and ependymal cells of the cerebral ventricles. In testis, abundant expression in late prophase of meiosis I with a dramatic decrease after the first meiotic division (at protein level).

Its subcellular location is the cytoplasm. It localises to the cell projection. The protein localises to the cilium. It is found in the dynein axonemal particle. The protein resides in the flagellum. Functionally, involved in dynein arm assembly, is important for expression and transporting outer dynein arm (ODA) proteins from the cytoplasm to the cilia. Acts as a crucial component in the formation and motility of spermatozoal flagella. The polypeptide is Dynein axonemal assembly factor 11 (Dnaaf11) (Mus musculus (Mouse)).